Here is an 81-residue protein sequence, read N- to C-terminus: Photosystem I iron-sulfur center (81 aa).

2 consecutive 4Fe-4S ferredoxin-type domains span residues 2 to 31 (SHSV…MIPW) and 39 to 68 (IAPA…VRVY). Residues Cys-11, Cys-14, Cys-17, Cys-21, Cys-48, Cys-51, Cys-54, and Cys-58 each contribute to the [4Fe-4S] cluster site.

The eukaryotic PSI reaction center is composed of at least 11 subunits. The cofactor is [4Fe-4S] cluster.

Its subcellular location is the plastid. It localises to the chloroplast thylakoid membrane. The catalysed reaction is reduced [plastocyanin] + hnu + oxidized [2Fe-2S]-[ferredoxin] = oxidized [plastocyanin] + reduced [2Fe-2S]-[ferredoxin]. Its function is as follows. Apoprotein for the two 4Fe-4S centers FA and FB of photosystem I (PSI); essential for photochemical activity. FB is the terminal electron acceptor of PSI, donating electrons to ferredoxin. The C-terminus interacts with PsaA/B/D and helps assemble the protein into the PSI complex. Required for binding of PsaD and PsaE to PSI. PSI is a plastocyanin-ferredoxin oxidoreductase, converting photonic excitation into a charge separation, which transfers an electron from the donor P700 chlorophyll pair to the spectroscopically characterized acceptors A0, A1, FX, FA and FB in turn. The sequence is that of Photosystem I iron-sulfur center from Liriodendron tulipifera (Tuliptree).